The following is a 420-amino-acid chain: MLTNPIFYLTNSNTSKASTHSNTNSKSLFNTKREDLQILYKLNQLLIEKSILHPYQRILIAVSGGQDSICLLNILNKLRSTWHWKLGIVHCDHKWYLDSALQAIHVSRLAANMQIDLYQALTTQSVNNEQLARNWRYELIRHVAICHNFSVIVTGHTASDRVETLIYNLIRGSGISGLQSISWKRKLNSMLTIRMRSVEEQIILYSKHVKCYQNRENLLEDKKNVDIYLIRPLLNVSRMELKHLVQNWKLSIWSDCSNQNISICRNRIRHQLLPYLRQYFHPKIDYVLNSCTEVMYTETLYLDSIARYVLSKALSFISMPLNDQTCVKLDFELLRAVPLAIQRRILKYFLDVITHTSVSFKHVEQVRIACLITTNSSNQFAKDSMNFTDQLLINRSIYLPGKKILQVINARFLIICNNIT.

An ATP-binding site is contributed by serine 63–serine 68.

It belongs to the tRNA(Ile)-lysidine synthase family.

The protein localises to the plastid. It is found in the chloroplast. It catalyses the reaction cytidine(34) in tRNA(Ile2) + L-lysine + ATP = lysidine(34) in tRNA(Ile2) + AMP + diphosphate + H(+). Its function is as follows. Ligates lysine onto the cytidine present at position 34 of the AUA codon-specific tRNA(Ile) that contains the anticodon CAU, in an ATP-dependent manner. Cytidine is converted to lysidine, thus changing the amino acid specificity of the tRNA from methionine to isoleucine. This is tRNA(Ile)-lysidine synthase, chloroplastic from Zygnema circumcarinatum (Green alga).